The following is a 154-amino-acid chain: Large ribosomal subunit protein uL13 (154 aa).

The protein belongs to the universal ribosomal protein uL13 family. Part of the 50S ribosomal subunit.

Its function is as follows. This protein is one of the early assembly proteins of the 50S ribosomal subunit, although it is not seen to bind rRNA by itself. It is important during the early stages of 50S assembly. The sequence is that of Large ribosomal subunit protein uL13 from Brucella anthropi (strain ATCC 49188 / DSM 6882 / CCUG 24695 / JCM 21032 / LMG 3331 / NBRC 15819 / NCTC 12168 / Alc 37) (Ochrobactrum anthropi).